A 383-amino-acid chain; its full sequence is V-type proton ATPase subunit C 1-A (383 aa).

Thr-2 is subject to N-acetylthreonine.

It belongs to the V-ATPase C subunit family. As to quaternary structure, V-ATPase is a heteromultimeric enzyme made up of two complexes: the ATP-hydrolytic V1 complex and the proton translocation V0 complex. The V1 complex consists of three catalytic AB heterodimers that form a heterohexamer, three peripheral stalks each consisting of EG heterodimers, one central rotor including subunits D and F, and the regulatory subunits C and H. The proton translocation complex V0 consists of the proton transport subunit a, a ring of proteolipid subunits c9c'', rotary subunit d, subunits e and f, and two accessory subunits.

In terms of biological role, subunit of the V1 complex of vacuolar(H+)-ATPase (V-ATPase), a multisubunit enzyme composed of a peripheral complex (V1) that hydrolyzes ATP and a membrane integral complex (V0) that translocates protons. V-ATPase is responsible for acidifying and maintaining the pH of intracellular compartments and in some cell types, is targeted to the plasma membrane, where it is responsible for acidifying the extracellular environment. Subunit C is necessary for the assembly of the catalytic sector of the enzyme and is likely to have a specific function in its catalytic activity. This chain is V-type proton ATPase subunit C 1-A (atp6v1c1a), found in Danio rerio (Zebrafish).